Here is a 60-residue protein sequence, read N- to C-terminus: Metallothionein-like protein EMB30 (60 aa).

It belongs to the metallothionein superfamily. Type 15 family.

Functionally, metallothioneins have a high content of cysteine residues that bind various heavy metals. In Picea glauca (White spruce), this protein is Metallothionein-like protein EMB30 (EMB30).